Here is a 476-residue protein sequence, read N- to C-terminus: Cysteine--tRNA ligase (476 aa).

Cys29 is a binding site for Zn(2+). The 'HIGH' region motif lies at 31 to 41 (PTVYDYPHLGH). Zn(2+) is bound by residues Cys209, His234, and Glu238. The short motif at 266–270 (KMSKS) is the 'KMSKS' region element. Lys269 contacts ATP.

This sequence belongs to the class-I aminoacyl-tRNA synthetase family. Zn(2+) serves as cofactor.

It is found in the cytoplasm. The enzyme catalyses tRNA(Cys) + L-cysteine + ATP = L-cysteinyl-tRNA(Cys) + AMP + diphosphate. The sequence is that of Cysteine--tRNA ligase from Thermococcus gammatolerans (strain DSM 15229 / JCM 11827 / EJ3).